Reading from the N-terminus, the 249-residue chain is MFYIVGIGPGPGYITERAIQILQEVECIFYEDYTGPLDVATLRRYARVEPVKLARRDLEDESGRKIFECLQEGKKAALVTAGDPMLATSHAALITLAKAKGYSVEVVPGVSIICAAFSASCLSIYKLGGVATVTYPRGGVYSVRPYELVEQNLARGLHTLLLLDIRDDGVFMSPRDAAEVLLTLEGRERRGVFTRDRRVVVVSKLGWGGSVLYAPLGEIVQSEMEGPAVFIVPAGLNPVERECIKTFSK.

S-adenosyl-L-methionine is bound by residues D83, L86, S111–I112, L163, and L205.

The protein belongs to the diphthine synthase family. In terms of assembly, homodimer.

It carries out the reaction 2-[(3S)-amino-3-carboxypropyl]-L-histidyl-[translation elongation factor 2] + 3 S-adenosyl-L-methionine = diphthine-[translation elongation factor 2] + 3 S-adenosyl-L-homocysteine + 3 H(+). The protein operates within protein modification; peptidyl-diphthamide biosynthesis. Functionally, S-adenosyl-L-methionine-dependent methyltransferase that catalyzes the trimethylation of the amino group of the modified target histidine residue in translation elongation factor 2 (EF-2), to form an intermediate called diphthine. The three successive methylation reactions represent the second step of diphthamide biosynthesis. This chain is Diphthine synthase, found in Pyrobaculum islandicum (strain DSM 4184 / JCM 9189 / GEO3).